We begin with the raw amino-acid sequence, 106 residues long: MVTMNRLVLSGTVCKTPIRKVSPSGIPHCQFVLEHRSTQEEAGLSRQAWCRMPVIVSGLSSQAVTHSITVGTQLTVHGFISCHQGRNGLSKIVLHAEQIELIDSGD.

One can recognise an SSB domain in the interval 4–103 (MNRLVLSGTV…LHAEQIELID (100 aa)).

It belongs to the PriB family. As to quaternary structure, homodimer. Interacts with PriA and DnaT. Component of the replication restart primosome. Primosome assembly occurs via a 'hand-off' mechanism. PriA binds to replication forks, subsequently PriB then DnaT bind; DnaT then displaces ssDNA to generate the helicase loading substrate.

Its function is as follows. Involved in the restart of stalled replication forks, which reloads the replicative helicase on sites other than the origin of replication; the PriA-PriB pathway is the major replication restart pathway. During primosome assembly it facilitates complex formation between PriA and DnaT on DNA; stabilizes PriA on DNA. Stimulates the DNA unwinding activity of PriA helicase. The polypeptide is Replication restart protein PriB (Pectobacterium atrosepticum (strain SCRI 1043 / ATCC BAA-672) (Erwinia carotovora subsp. atroseptica)).